A 243-amino-acid chain; its full sequence is DNA repair protein RecO (243 aa).

Belongs to the RecO family.

In terms of biological role, involved in DNA repair and RecF pathway recombination. This Xylella fastidiosa (strain M12) protein is DNA repair protein RecO.